Reading from the N-terminus, the 505-residue chain is Maturase K (505 aa).

The protein belongs to the intron maturase 2 family. MatK subfamily.

Its subcellular location is the plastid. The protein localises to the chloroplast. Its function is as follows. Usually encoded in the trnK tRNA gene intron. Probably assists in splicing its own and other chloroplast group II introns. The chain is Maturase K from Ulmus parvifolia (Chinese elm).